We begin with the raw amino-acid sequence, 431 residues long: 3-phosphoshikimate 1-carboxyvinyltransferase (431 aa).

Lys-22, Ser-23, and Arg-27 together coordinate 3-phosphoshikimate. Phosphoenolpyruvate is bound at residue Lys-22. Residues Gly-94 and Arg-122 each contribute to the phosphoenolpyruvate site. Ser-168, Ser-169, Gln-170, Ser-196, Asp-315, and Lys-342 together coordinate 3-phosphoshikimate. Gln-170 provides a ligand contact to phosphoenolpyruvate. The active-site Proton acceptor is the Asp-315. 3 residues coordinate phosphoenolpyruvate: Arg-346, Arg-390, and Lys-414.

It belongs to the EPSP synthase family. Monomer.

The protein resides in the cytoplasm. It carries out the reaction 3-phosphoshikimate + phosphoenolpyruvate = 5-O-(1-carboxyvinyl)-3-phosphoshikimate + phosphate. It functions in the pathway metabolic intermediate biosynthesis; chorismate biosynthesis; chorismate from D-erythrose 4-phosphate and phosphoenolpyruvate: step 6/7. Catalyzes the transfer of the enolpyruvyl moiety of phosphoenolpyruvate (PEP) to the 5-hydroxyl of shikimate-3-phosphate (S3P) to produce enolpyruvyl shikimate-3-phosphate and inorganic phosphate. This is 3-phosphoshikimate 1-carboxyvinyltransferase from Nitrosomonas europaea (strain ATCC 19718 / CIP 103999 / KCTC 2705 / NBRC 14298).